Here is an 80-residue protein sequence, read N- to C-terminus: Conotoxin Cl11.2 (80 aa).

Positions 1–19 are cleaved as a signal peptide; sequence MKMSVTFLLILMILPLFTG. Residues 20–41 constitute a propeptide that is removed on maturation; it reads EWQSGSRLSALKKRLLEKRLLQ. Cystine bridges form between cysteine 45–cysteine 59, cysteine 52–cysteine 63, cysteine 58–cysteine 68, and cysteine 62–cysteine 74.

It belongs to the conotoxin I1 superfamily. As to expression, expressed by the venom duct.

It localises to the secreted. The chain is Conotoxin Cl11.2 from Californiconus californicus (California cone).